Here is a 67-residue protein sequence, read N- to C-terminus: Alpha-toxin Tf3 (67 aa).

The 62-residue stretch at 2-63 (KDGYPVEGDN…EPTKTNGRCK (62 aa)) folds into the LCN-type CS-alpha/beta domain. 4 disulfides stabilise this stretch: Cys-12–Cys-62, Cys-16–Cys-38, Cys-24–Cys-45, and Cys-28–Cys-47. At Pro-64 the chain carries Proline amide.

The protein belongs to the long (4 C-C) scorpion toxin superfamily. Sodium channel inhibitor family. Alpha subfamily. As to expression, expressed by the venom gland.

Its subcellular location is the secreted. Functionally, alpha toxins bind voltage-independently at site-3 of sodium channels (Nav) and inhibit the inactivation of the activated channels, thereby blocking neuronal transmission. The protein is Alpha-toxin Tf3 of Tityus fasciolatus (Central Brazilian scorpion).